The following is a 212-amino-acid chain: Cytidylate kinase (212 aa).

Position 7-15 (7-15 (GPAASGKGT)) interacts with ATP.

Belongs to the cytidylate kinase family. Type 1 subfamily.

The protein localises to the cytoplasm. It carries out the reaction CMP + ATP = CDP + ADP. It catalyses the reaction dCMP + ATP = dCDP + ADP. This is Cytidylate kinase from Rhodopseudomonas palustris (strain HaA2).